A 573-amino-acid chain; its full sequence is Urease subunit alpha (573 aa).

Residues 136-573 (GAIDCHVHFI…LPMAQRYFLF (438 aa)) form the Urease domain. Ni(2+) is bound by residues H141, H143, and K224. K224 carries the post-translational modification N6-carboxylysine. H226 contacts substrate. Ni(2+)-binding residues include H253 and H279. H327 functions as the Proton donor in the catalytic mechanism. A Ni(2+)-binding site is contributed by D367.

It belongs to the metallo-dependent hydrolases superfamily. Urease alpha subunit family. In terms of assembly, heterotrimer of UreA (gamma), UreB (beta) and UreC (alpha) subunits. Three heterotrimers associate to form the active enzyme. The cofactor is Ni cation. Post-translationally, carboxylation allows a single lysine to coordinate two nickel ions.

The protein localises to the cytoplasm. It catalyses the reaction urea + 2 H2O + H(+) = hydrogencarbonate + 2 NH4(+). The protein operates within nitrogen metabolism; urea degradation; CO(2) and NH(3) from urea (urease route): step 1/1. The protein is Urease subunit alpha of Nocardia farcinica (strain IFM 10152).